A 739-amino-acid polypeptide reads, in one-letter code: Catalase-peroxidase 2 (739 aa).

Residues 1–26 (MKKTTIPTLSALTLAMSLAFGGAAIA) form the signal peptide. A cross-link (tryptophyl-tyrosyl-methioninium (Trp-Tyr) (with M-253)) is located at residues 105–227 (WHSAGVYRIF…MGATQMGLIY (123 aa)). H106 serves as the catalytic Proton acceptor. Residues 227–253 (YVNPEGPNGVPDPLASAKEIRDTFGRM) constitute a cross-link (tryptophyl-tyrosyl-methioninium (Tyr-Met) (with W-105)). H268 lines the heme b pocket.

It belongs to the peroxidase family. Peroxidase/catalase subfamily. As to quaternary structure, homodimer or homotetramer. Heme b serves as cofactor. In terms of processing, formation of the three residue Trp-Tyr-Met cross-link is important for the catalase, but not the peroxidase activity of the enzyme.

It catalyses the reaction H2O2 + AH2 = A + 2 H2O. It carries out the reaction 2 H2O2 = O2 + 2 H2O. In terms of biological role, bifunctional enzyme with both catalase and broad-spectrum peroxidase activity. This chain is Catalase-peroxidase 2, found in Shewanella sp. (strain MR-4).